The chain runs to 378 residues: UDP-N-acetylglucosamine--N-acetylmuramyl-(pentapeptide) pyrophosphoryl-undecaprenol N-acetylglucosamine transferase (378 aa).

Residues 14–16 (TGG), Asn-125, Arg-165, Ser-193, and Gln-293 each bind UDP-N-acetyl-alpha-D-glucosamine.

This sequence belongs to the glycosyltransferase 28 family. MurG subfamily.

The protein resides in the cell inner membrane. It catalyses the reaction di-trans,octa-cis-undecaprenyl diphospho-N-acetyl-alpha-D-muramoyl-L-alanyl-D-glutamyl-meso-2,6-diaminopimeloyl-D-alanyl-D-alanine + UDP-N-acetyl-alpha-D-glucosamine = di-trans,octa-cis-undecaprenyl diphospho-[N-acetyl-alpha-D-glucosaminyl-(1-&gt;4)]-N-acetyl-alpha-D-muramoyl-L-alanyl-D-glutamyl-meso-2,6-diaminopimeloyl-D-alanyl-D-alanine + UDP + H(+). Its pathway is cell wall biogenesis; peptidoglycan biosynthesis. Cell wall formation. Catalyzes the transfer of a GlcNAc subunit on undecaprenyl-pyrophosphoryl-MurNAc-pentapeptide (lipid intermediate I) to form undecaprenyl-pyrophosphoryl-MurNAc-(pentapeptide)GlcNAc (lipid intermediate II). The polypeptide is UDP-N-acetylglucosamine--N-acetylmuramyl-(pentapeptide) pyrophosphoryl-undecaprenol N-acetylglucosamine transferase (Bartonella henselae (strain ATCC 49882 / DSM 28221 / CCUG 30454 / Houston 1) (Rochalimaea henselae)).